The primary structure comprises 442 residues: Serum response factor-binding protein 1 (442 aa).

Coiled-coil stretches lie at residues 55-77 (EDAL…AMKE) and 118-140 (LLKR…RQNA). Disordered regions lie at residues 137–336 (RQNA…LETH) and 358–442 (FHSL…TFDD). 2 stretches are compositionally biased toward basic and acidic residues: residues 149–159 (ASKESQCEDIP) and 167–188 (ESQH…DPTT). K202 is covalently cross-linked (Glycyl lysine isopeptide (Lys-Gly) (interchain with G-Cter in SUMO2)). Residue S215 is modified to Phosphoserine. Residues 237 to 247 (GNHSQGKASTR) are compositionally biased toward polar residues. Positions 266-278 (VSEEEKEYFDDST) are enriched in acidic residues. A phosphoserine mark is found at S277, S292, and S294. A Glycyl lysine isopeptide (Lys-Gly) (interchain with G-Cter in SUMO2) cross-link involves residue K329. The residue at position 362 (S362) is a Phosphoserine. Residues 367–382 (SRRDPREQAPKNKAPD) are compositionally biased toward basic and acidic residues.

As to quaternary structure, interacts with SRF. Forms complexes with SRF and SRF cofactors ARID2, MYOCD and NKX2-5. Interacts with the N-terminus of SLC2A4.

It localises to the cytoplasm. Its subcellular location is the perinuclear region. Functionally, may be involved in regulating transcriptional activation of cardiac genes during the aging process. May play a role in biosynthesis and/or processing of SLC2A4 in adipose cells. This is Serum response factor-binding protein 1 from Rattus norvegicus (Rat).